The following is a 243-amino-acid chain: Putative ABC transporter arginine-binding protein 2 (243 aa).

Residues 1–19 (MKKVLIAALIAGFSLSATA) form the signal peptide.

This sequence belongs to the bacterial solute-binding protein 3 family. As to quaternary structure, the complex is composed of two ATP-binding proteins (ArtP), two transmembrane proteins (ArtM and ArtQ) and two solute-binding proteins (ArtJ and ArtI).

The protein localises to the periplasm. In terms of biological role, part of the ABC transporter complex ArtPIQMJ involved in arginine transport. This is Putative ABC transporter arginine-binding protein 2 (artI) from Escherichia coli (strain K12).